The chain runs to 429 residues: Serine--tRNA ligase (429 aa).

228-230 (TSE) contributes to the L-serine binding site. Residue 259 to 261 (RAE) participates in ATP binding. E282 is a binding site for L-serine. 346 to 349 (EISS) contributes to the ATP binding site. An L-serine-binding site is contributed by S384.

Belongs to the class-II aminoacyl-tRNA synthetase family. Type-1 seryl-tRNA synthetase subfamily. In terms of assembly, homodimer. The tRNA molecule binds across the dimer.

It localises to the cytoplasm. It carries out the reaction tRNA(Ser) + L-serine + ATP = L-seryl-tRNA(Ser) + AMP + diphosphate + H(+). The catalysed reaction is tRNA(Sec) + L-serine + ATP = L-seryl-tRNA(Sec) + AMP + diphosphate + H(+). Its pathway is aminoacyl-tRNA biosynthesis; selenocysteinyl-tRNA(Sec) biosynthesis; L-seryl-tRNA(Sec) from L-serine and tRNA(Sec): step 1/1. Catalyzes the attachment of serine to tRNA(Ser). Is also able to aminoacylate tRNA(Sec) with serine, to form the misacylated tRNA L-seryl-tRNA(Sec), which will be further converted into selenocysteinyl-tRNA(Sec). The chain is Serine--tRNA ligase from Anaplasma marginale (strain St. Maries).